The primary structure comprises 353 residues: C2 calcium-dependent domain-containing protein 4D (353 aa).

The tract at residues 135 to 191 (CRAPDSDTASSPDSSPFGSPRPGLGRRRVSRPHSLSPEKASSADTSPHSPRRAGPPT) is disordered. The span at 140–150 (SDTASSPDSSP) shows a compositional bias: low complexity. In terms of domain architecture, C2 spans 217 to 343 (RGGQLRLSTE…PPLGGGLGPG (127 aa)).

The sequence is that of C2 calcium-dependent domain-containing protein 4D (C2CD4D) from Homo sapiens (Human).